Reading from the N-terminus, the 363-residue chain is NAD(P)H-quinone oxidoreductase subunit 1, chloroplastic (363 aa).

6 consecutive transmembrane segments (helical) span residues 28 to 48 (WVLV…LVIV), 98 to 118 (FSIG…VIPF), 127 to 147 (LPIG…GLLM), 248 to 268 (YSGI…LVSS), 300 to 320 (VFGM…FLFI), and 343 to 363 (FLLP…LFSL).

The protein belongs to the complex I subunit 1 family. NDH is composed of at least 16 different subunits, 5 of which are encoded in the nucleus.

The protein localises to the plastid. It localises to the chloroplast thylakoid membrane. It carries out the reaction a plastoquinone + NADH + (n+1) H(+)(in) = a plastoquinol + NAD(+) + n H(+)(out). The enzyme catalyses a plastoquinone + NADPH + (n+1) H(+)(in) = a plastoquinol + NADP(+) + n H(+)(out). NDH shuttles electrons from NAD(P)H:plastoquinone, via FMN and iron-sulfur (Fe-S) centers, to quinones in the photosynthetic chain and possibly in a chloroplast respiratory chain. The immediate electron acceptor for the enzyme in this species is believed to be plastoquinone. Couples the redox reaction to proton translocation, and thus conserves the redox energy in a proton gradient. This is NAD(P)H-quinone oxidoreductase subunit 1, chloroplastic from Cucumis sativus (Cucumber).